We begin with the raw amino-acid sequence, 432 residues long: Adenylosuccinate synthetase (432 aa).

GTP is bound by residues 12–18 (GDEGKGK) and 40–42 (GHT). Asp13 acts as the Proton acceptor in catalysis. Residues Asp13 and Gly40 each coordinate Mg(2+). IMP-binding positions include 13–16 (DEGK), 38–41 (NAGH), Thr130, Arg144, Gln225, Thr240, and Arg304. His41 functions as the Proton donor in the catalytic mechanism. 300–306 (ATTGRRR) is a binding site for substrate. GTP contacts are provided by residues Arg306, 332 to 334 (KLD), and 415 to 417 (SVG).

Belongs to the adenylosuccinate synthetase family. As to quaternary structure, homodimer. Mg(2+) serves as cofactor.

The protein localises to the cytoplasm. The enzyme catalyses IMP + L-aspartate + GTP = N(6)-(1,2-dicarboxyethyl)-AMP + GDP + phosphate + 2 H(+). It participates in purine metabolism; AMP biosynthesis via de novo pathway; AMP from IMP: step 1/2. In terms of biological role, plays an important role in the de novo pathway of purine nucleotide biosynthesis. Catalyzes the first committed step in the biosynthesis of AMP from IMP. In Syntrophus aciditrophicus (strain SB), this protein is Adenylosuccinate synthetase.